Here is a 368-residue protein sequence, read N- to C-terminus: Protein L-Myc (368 aa).

Disordered regions lie at residues 39-79, 112-179, and 218-295; these read PPTS…RGHS, RLAP…EKRR, and FPPE…FLER. The span at 135 to 147 shows a compositional bias: polar residues; the sequence is LEASNPAPATQCQ. Over residues 247-258 the composition is skewed to acidic residues; that stretch reads EEEEEEEEEEEI. The segment covering 283–294 has biased composition (basic and acidic residues); the sequence is DVTKRKNHNFLE. Positions 285–337 constitute a bHLH domain; it reads TKRKNHNFLERKRRNDLRSRFLALRDQVPTLASCSKAPKVVILSKALEYLQAL. The tract at residues 337 to 365 is leucine-zipper; sequence LVGAEKKMATEKRQLRCRQQQLQKRIAYL.

As to quaternary structure, efficient DNA binding requires dimerization with another bHLH protein. Binds DNA as a heterodimer with MAX.

It is found in the nucleus. This Mus musculus (Mouse) protein is Protein L-Myc (Mycl).